Here is a 706-residue protein sequence, read N- to C-terminus: Centrosomal protein kizuna (706 aa).

Residues Gln-63–Lys-113 adopt a coiled-coil conformation. A compositionally biased stretch (basic residues) spans Thr-105–Ser-116. Disordered regions lie at residues Thr-105–His-184, Val-215–Gly-347, Glu-571–Val-603, Ser-620–Pro-665, and Glu-677–Asp-706. Basic and acidic residues predominate over residues Gly-118–Ser-127. Composition is skewed to polar residues over residues Arg-128 to Ala-156 and His-164 to Gly-180. The span at Val-215 to Val-251 shows a compositional bias: basic and acidic residues. Residues Thr-272–Ser-283 show a composition bias toward low complexity. The segment covering Gly-293 to Asp-304 has biased composition (acidic residues). Residues Pro-308 to Ile-320 show a composition bias toward polar residues. Positions Glu-586–Ala-598 are enriched in acidic residues. Over residues Pro-638–Val-648 the composition is skewed to basic and acidic residues.

This sequence belongs to the kizuna family.

The protein localises to the cytoplasm. It is found in the cytoskeleton. The protein resides in the microtubule organizing center. Its subcellular location is the centrosome. It localises to the cilium basal body. Centrosomal protein required for establishing a robust mitotic centrosome architecture that can endure the forces that converge on the centrosomes during spindle formation. Required for stabilizing the expanded pericentriolar material around the centriole. This is Centrosomal protein kizuna (kiz) from Danio rerio (Zebrafish).